The chain runs to 503 residues: Annexin A11 (503 aa).

Composition is skewed to pro residues over residues 80–117 (GYPP…PGMP) and 123–167 (PGAP…PVPS). The segment at 80-172 (GYPPVPPGGF…QPVPSYPGYS (93 aa)) is disordered. 4 Annexin repeats span residues 198 to 269 (FDPL…ALMK), 270 to 341 (TPVL…SLSQ), 353 to 425 (SLVQ…AVVK), and 429 to 500 (NTPA…KICG). Residues K246 and K253 each carry the N6-acetyllysine modification. Residue K477 is modified to N6-acetyllysine.

Belongs to the annexin family. Interacts with S100A6. Interacts with PDCD6 in a calcium-dependent manner. Interacts with KIF23 during cytokinesis.

The protein localises to the cytoplasm. It localises to the melanosome. It is found in the nucleus envelope. Its subcellular location is the nucleus. The protein resides in the nucleoplasm. The protein localises to the cytoskeleton. It localises to the spindle. Functionally, required for midbody formation and completion of the terminal phase of cytokinesis. Binds specifically to calcyclin in a calcium-dependent manner. In Mus musculus (Mouse), this protein is Annexin A11 (Anxa11).